The primary structure comprises 865 residues: Alanine--tRNA ligase (865 aa).

Residues His554, His558, Cys656, and His660 each contribute to the Zn(2+) site.

This sequence belongs to the class-II aminoacyl-tRNA synthetase family. The cofactor is Zn(2+).

It is found in the cytoplasm. The enzyme catalyses tRNA(Ala) + L-alanine + ATP = L-alanyl-tRNA(Ala) + AMP + diphosphate. Catalyzes the attachment of alanine to tRNA(Ala) in a two-step reaction: alanine is first activated by ATP to form Ala-AMP and then transferred to the acceptor end of tRNA(Ala). Also edits incorrectly charged Ser-tRNA(Ala) and Gly-tRNA(Ala) via its editing domain. This is Alanine--tRNA ligase from Idiomarina loihiensis (strain ATCC BAA-735 / DSM 15497 / L2-TR).